The primary structure comprises 177 residues: Olfactory protein (177 aa).

The signal sequence occupies residues 1–17 (MIRIIAIVVLFFLQCQA). Cysteines 81 and 174 form a disulfide.

Belongs to the calycin superfamily. Lipocalin family. In terms of tissue distribution, synthesized in Bowman glands, which secrete the mucus that bathes the cilia of the olfactory neuroepithelium.

It is found in the secreted. This is Olfactory protein from Lithobates pipiens (Northern leopard frog).